We begin with the raw amino-acid sequence, 397 residues long: MTLLNPFFGEFGGMYVPQILIPALLQLEKAFVDAQEDPAFIAEFQELLTEYAGRPTPLTLTRNLTKGTKTRLYLKREDLLHGGAHKTNQVLGQALLAKRMGKTEIIAETGAGQHGVATALACALLGLKCRVYMGAKDCERQKPNVFRMKLMGATVIPVHSGSSTLKDACNEALRDWAASYDNAHYLLGTAAGPHPFPTIVREFQKMIGEEAKAQCFKKEERLPDAVIACVGGGSNAIGMFADFIDNKEVRLIGVEPGGHGIESGEHGAPLGHGSKGVFFGMHSYLMQDKQGQIQESYSVSAGLDFPSVGPQHAHLASIGRAEYVSITDKEALDAFQELAKSEGIIPALESSHALAHALKMARSEPEKELVLIVNLSGRGDKDIFTVADIFEKEGTLS.

Lys86 is modified (N6-(pyridoxal phosphate)lysine).

The protein belongs to the TrpB family. As to quaternary structure, tetramer of two alpha and two beta chains. It depends on pyridoxal 5'-phosphate as a cofactor.

It carries out the reaction (1S,2R)-1-C-(indol-3-yl)glycerol 3-phosphate + L-serine = D-glyceraldehyde 3-phosphate + L-tryptophan + H2O. Its pathway is amino-acid biosynthesis; L-tryptophan biosynthesis; L-tryptophan from chorismate: step 5/5. In terms of biological role, the beta subunit is responsible for the synthesis of L-tryptophan from indole and L-serine. The sequence is that of Tryptophan synthase beta chain from Aeromonas salmonicida (strain A449).